Reading from the N-terminus, the 121-residue chain is Large ribosomal subunit protein bL19 (121 aa).

Belongs to the bacterial ribosomal protein bL19 family.

Its function is as follows. This protein is located at the 30S-50S ribosomal subunit interface and may play a role in the structure and function of the aminoacyl-tRNA binding site. In Mesomycoplasma hyopneumoniae (strain 232) (Mycoplasma hyopneumoniae), this protein is Large ribosomal subunit protein bL19.